The primary structure comprises 220 residues: Zip homologous protein 1 (220 aa).

An RING-type zinc finger spans residues 6–44 (CNGCGCSPSKRQFFITACSHVFCETCRTTPTADFCHLCK). The stretch at 124 to 155 (LTSFEENNRKKLEDIERENEKLRNLISALELK) forms a coiled coil. Disordered regions lie at residues 166 to 186 (EFFM…SDVD) and 201 to 220 (RSDS…GSLF). Over residues 171–180 (GTPTSSNPSV) the composition is skewed to polar residues.

Interacts with zhp-2; the interaction is required for their chromosome association and stability. Expressed in the germline.

The protein resides in the chromosome. In terms of biological role, recruited co-dependently with zhp-2 to the synaptonemal complex between homologous chromosome pairs to regulate the formation and number of crossover events between homologs during meiotic recombination. Together with zhp-2, promotes the accumulation of pro-crossover proteins, including zhp-3 and zhp-4, at a designated crossover site along the recombination intermediate. Limits the number of crossover sites along a recombination intermediate by restricting the association of these pro-crossover proteins with other recombination sites during late prophase. Also, together with zhp-2, plays a role in chromosome remodeling following crossover formation to promote two successive rounds of chromosome segregation during meiosis. The protein is Zip homologous protein 1 of Caenorhabditis elegans.